Consider the following 1204-residue polypeptide: E3 ubiquitin-protein ligase DZIP3 (1204 aa).

2 disordered regions span residues 1-22 (MDSL…QTKE) and 640-681 (SIPS…EQVS). Over residues 649–658 (SVKDLQEVKS) the composition is skewed to basic and acidic residues. Residues 659–668 (KTKKKKRTKS) show a composition bias toward basic residues. 2 coiled-coil regions span residues 746 to 861 (KETE…TSRA) and 906 to 941 (QLKA…KVKQ). Positions 1088 to 1098 (PKKSESEEKSA) are enriched in basic and acidic residues. Residues 1088-1141 (PKKSESEEKSAQDGNNASPSHTASQPNAPQDPKSAQGSATWEGDKDMDNEEEEE) are disordered. Over residues 1099–1126 (QDGNNASPSHTASQPNAPQDPKSAQGSA) the composition is skewed to polar residues. Over residues 1132–1141 (KDMDNEEEEE) the composition is skewed to acidic residues. The segment at 1144–1184 (CVICHENLSPENLSVLPCAHKFHSQCIRPWLMQQGTCPTCR) adopts an RING-type; atypical zinc-finger fold.

In terms of assembly, probably interacts with DAZL.

The protein resides in the cytoplasm. It catalyses the reaction S-ubiquitinyl-[E2 ubiquitin-conjugating enzyme]-L-cysteine + [acceptor protein]-L-lysine = [E2 ubiquitin-conjugating enzyme]-L-cysteine + N(6)-ubiquitinyl-[acceptor protein]-L-lysine.. The protein operates within protein modification; protein ubiquitination. E3 Ubiquitin ligase proteins mediate ubiquitination and subsequent proteasomal degradation of target proteins. E3 ubiquitin ligases accept ubiquitin from an E2 ubiquitin-conjugating enzyme in the form of a thioester and then directly transfers the ubiquitin to targeted substrates. Able to specifically bind RNA. The protein is E3 ubiquitin-protein ligase DZIP3 (Dzip3) of Mus musculus (Mouse).